Reading from the N-terminus, the 477-residue chain is Glutamate--tRNA ligase (477 aa).

The 'HIGH' region signature appears at 8–18; it reads PSPTGTLHIGT. Positions 247-251 match the 'KMSKS' region motif; it reads KLSKR. Residue Lys250 coordinates ATP.

Belongs to the class-I aminoacyl-tRNA synthetase family. Glutamate--tRNA ligase type 1 subfamily. Monomer.

Its subcellular location is the cytoplasm. The enzyme catalyses tRNA(Glu) + L-glutamate + ATP = L-glutamyl-tRNA(Glu) + AMP + diphosphate. Its function is as follows. Catalyzes the attachment of glutamate to tRNA(Glu) in a two-step reaction: glutamate is first activated by ATP to form Glu-AMP and then transferred to the acceptor end of tRNA(Glu). The polypeptide is Glutamate--tRNA ligase (Synechococcus sp. (strain CC9605)).